The sequence spans 53 residues: uncharacterized protein (53 aa).

It is found in the plastid. Its subcellular location is the chloroplast. This is an uncharacterized protein from Guillardia theta (Cryptophyte).